The primary structure comprises 375 residues: 23S rRNA (uracil(747)-C(5))-methyltransferase RlmC (375 aa).

Residues Cys3, Cys11, Cys14, and Cys87 each contribute to the [4Fe-4S] cluster site. Gln212, Phe241, Glu262, and Asn307 together coordinate S-adenosyl-L-methionine. Cys334 acts as the Nucleophile in catalysis.

The protein belongs to the class I-like SAM-binding methyltransferase superfamily. RNA M5U methyltransferase family. RlmC subfamily.

The enzyme catalyses uridine(747) in 23S rRNA + S-adenosyl-L-methionine = 5-methyluridine(747) in 23S rRNA + S-adenosyl-L-homocysteine + H(+). In terms of biological role, catalyzes the formation of 5-methyl-uridine at position 747 (m5U747) in 23S rRNA. This chain is 23S rRNA (uracil(747)-C(5))-methyltransferase RlmC, found in Salmonella paratyphi A (strain ATCC 9150 / SARB42).